The sequence spans 603 residues: MSKEPTAAAGLQNRFRTHYCGLLNRDSEGAGVKLGGWVHRIRDHGGLIFIDLRDHTGICQLVIQPESGELFRIAEGLHSESVISAEGSVVLRSDETVNPRLASGAIEVVVSAIKIESAAHPLPFPVADYMPTSEELRLKYRFLDLRRERLHENIIFRSQLTAAVRKYLTDLDFIEIQTPILTSSSPEGARDFLVPSRLHPGKFYALPQAPQQFKQLLMVSGFPRYFQIAPCFRDEDARADRSPGEFYQVDIEMSFVEQDDLFVILEGMFKHLVETMTTKRIAQYPFPRISYKDVMNRYGSDKPDLRIPIEIQDVTELFVNSGFKVFASNTKEGCCVKAMVLKGMGNESRLFYDKAEKRARELGSAGLAYIQFKEEAPKGPVVKFLKEEEMAALKEQLGIETGDVVFFGAGKWEQTCKIMGGMRNYFADVFPLDRDELSFCWIVDFPMFEYNEEDKKIDFSHNPFSMPQGEMEALEQHSPLDILAYQYDIVCNGIELSSGAIRNHRPDIMYKAFEIAGYPHDEVDARFGHMIEAFKHGAPPHGGIAPGLDRLVMILRDEQNIREVIAFPMNQSAQDLMMAAPSEVTAQQLKELHIKVELPEEEA.

E187 is an L-aspartate binding site. An aspartate region spans residues 211–214 (QQFK). 2 residues coordinate L-aspartate: R233 and H461. 233-235 (RDE) contacts ATP. ATP is bound at residue E495. R502 contributes to the L-aspartate binding site. 547-550 (GLDR) is an ATP binding site.

This sequence belongs to the class-II aminoacyl-tRNA synthetase family. Type 1 subfamily. Homodimer.

The protein resides in the cytoplasm. It catalyses the reaction tRNA(Asx) + L-aspartate + ATP = L-aspartyl-tRNA(Asx) + AMP + diphosphate. In terms of biological role, aspartyl-tRNA synthetase with relaxed tRNA specificity since it is able to aspartylate not only its cognate tRNA(Asp) but also tRNA(Asn). Reaction proceeds in two steps: L-aspartate is first activated by ATP to form Asp-AMP and then transferred to the acceptor end of tRNA(Asp/Asn). This Chlorobaculum parvum (strain DSM 263 / NCIMB 8327) (Chlorobium vibrioforme subsp. thiosulfatophilum) protein is Aspartate--tRNA(Asp/Asn) ligase.